A 269-amino-acid polypeptide reads, in one-letter code: 4-hydroxy-tetrahydrodipicolinate reductase (269 aa).

Residues 8–13 (GAAGRM) and Glu-34 each bind NAD(+). Residue Arg-35 participates in NADP(+) binding. Residues 98-100 (GTT) and 122-125 (APNY) each bind NAD(+). His-155 functions as the Proton donor/acceptor in the catalytic mechanism. His-156 is a binding site for (S)-2,3,4,5-tetrahydrodipicolinate. Lys-159 functions as the Proton donor in the catalytic mechanism. 165-166 (GT) contributes to the (S)-2,3,4,5-tetrahydrodipicolinate binding site.

It belongs to the DapB family.

The protein localises to the cytoplasm. The enzyme catalyses (S)-2,3,4,5-tetrahydrodipicolinate + NAD(+) + H2O = (2S,4S)-4-hydroxy-2,3,4,5-tetrahydrodipicolinate + NADH + H(+). The catalysed reaction is (S)-2,3,4,5-tetrahydrodipicolinate + NADP(+) + H2O = (2S,4S)-4-hydroxy-2,3,4,5-tetrahydrodipicolinate + NADPH + H(+). It participates in amino-acid biosynthesis; L-lysine biosynthesis via DAP pathway; (S)-tetrahydrodipicolinate from L-aspartate: step 4/4. In terms of biological role, catalyzes the conversion of 4-hydroxy-tetrahydrodipicolinate (HTPA) to tetrahydrodipicolinate. The polypeptide is 4-hydroxy-tetrahydrodipicolinate reductase (Vibrio vulnificus (strain CMCP6)).